Reading from the N-terminus, the 310-residue chain is Porphobilinogen deaminase (310 aa).

C242 is subject to S-(dipyrrolylmethanemethyl)cysteine.

This sequence belongs to the HMBS family. In terms of assembly, monomer. Requires dipyrromethane as cofactor.

The catalysed reaction is 4 porphobilinogen + H2O = hydroxymethylbilane + 4 NH4(+). Its pathway is porphyrin-containing compound metabolism; protoporphyrin-IX biosynthesis; coproporphyrinogen-III from 5-aminolevulinate: step 2/4. Its function is as follows. Tetrapolymerization of the monopyrrole PBG into the hydroxymethylbilane pre-uroporphyrinogen in several discrete steps. The polypeptide is Porphobilinogen deaminase (Halorhodospira halophila (strain DSM 244 / SL1) (Ectothiorhodospira halophila (strain DSM 244 / SL1))).